Reading from the N-terminus, the 255-residue chain is Trans-aconitate 2-methyltransferase (255 aa).

This sequence belongs to the methyltransferase superfamily. Tam family.

The protein localises to the cytoplasm. It catalyses the reaction trans-aconitate + S-adenosyl-L-methionine = (E)-3-(methoxycarbonyl)pent-2-enedioate + S-adenosyl-L-homocysteine. Functionally, catalyzes the S-adenosylmethionine monomethyl esterification of trans-aconitate. The polypeptide is Trans-aconitate 2-methyltransferase (Mycolicibacterium gilvum (strain PYR-GCK) (Mycobacterium gilvum (strain PYR-GCK))).